Here is a 368-residue protein sequence, read N- to C-terminus: Large ribosomal subunit protein bL27m (368 aa).

The transit peptide at Met-1–Thr-20 directs the protein to the mitochondrion. The disordered stretch occupies residues Lys-23–Lys-44. The segment covering Ser-31 to Lys-44 has biased composition (basic and acidic residues).

This sequence belongs to the bacterial ribosomal protein bL27 family.

It is found in the mitochondrion. Functionally, component of the large subunit of mitochondrial ribosome. The chain is Large ribosomal subunit protein bL27m (MRPL2) from Candida glabrata (strain ATCC 2001 / BCRC 20586 / JCM 3761 / NBRC 0622 / NRRL Y-65 / CBS 138) (Yeast).